A 154-amino-acid chain; its full sequence is Myoglobin (154 aa).

One can recognise a Globin domain in the interval 2 to 148; the sequence is GLSDDEWHHV…FRNDMASKYK (147 aa). H65 is a nitrite binding site. H65 is an O2 binding site. H94 contacts heme b.

This sequence belongs to the globin family. Monomeric.

It is found in the cytoplasm. The protein resides in the sarcoplasm. The enzyme catalyses Fe(III)-heme b-[protein] + nitric oxide + H2O = Fe(II)-heme b-[protein] + nitrite + 2 H(+). It catalyses the reaction H2O2 + AH2 = A + 2 H2O. Monomeric heme protein which primary function is to store oxygen and facilitate its diffusion within muscle tissues. Reversibly binds oxygen through a pentacoordinated heme iron and enables its timely and efficient release as needed during periods of heightened demand. Depending on the oxidative conditions of tissues and cells, and in addition to its ability to bind oxygen, it also has a nitrite reductase activity whereby it regulates the production of bioactive nitric oxide. Under stress conditions, like hypoxia and anoxia, it also protects cells against reactive oxygen species thanks to its pseudoperoxidase activity. The protein is Myoglobin (MB) of Graptemys geographica (Common map turtle).